We begin with the raw amino-acid sequence, 388 residues long: MKKAVHFGAGNIGRGFIGEILSKNGFEIYFVDTNKAIIDELNTRHSYEIGIASSSPEKISVSGVFGINNGENPKDVIEAIAQADIVTTAIGPNILPYIAELVAKGIQKRKEENKQVQIDIIACENMIGGSEFLEKKVAEYLSDSDKVYLANYIGFPNAAVDRIVPGQKHEDLLYVEVEPFCEWVIDESQIKNKSFKLEGVHYASNLEPFIERKLFSVNSGHATVAYSSAYKGYKTILEGLQHKEILSALKGVQKETRALLLAKWPQYFTEEDLMSYHQMIISRFANPKIIDEVTRVARTPIRKLGYDERFIRPIRELNERGLSYQNHLDIVGKIFAYQDENDSQSVQLQEKLSTMDFQRLIEEVTGLSNKKIILEIELVIKKYKNDSK.

4–15 serves as a coordination point for NAD(+); sequence AVHFGAGNIGRG.

Belongs to the mannitol dehydrogenase family.

It catalyses the reaction D-mannitol 1-phosphate + NAD(+) = beta-D-fructose 6-phosphate + NADH + H(+). The sequence is that of Mannitol-1-phosphate 5-dehydrogenase from Lactococcus lactis subsp. cremoris (strain MG1363).